The sequence spans 422 residues: Aspartate--tRNA(Asp/Asn) ligase (422 aa).

Glu-158 is an L-aspartate binding site. Residues 180-183 (QLYK) are aspartate. Residue Arg-201 participates in L-aspartate binding. Residues 201–203 (RME), 209–211 (RHL), and Glu-345 contribute to the ATP site. Ser-348 and Arg-352 together coordinate L-aspartate. 393–396 (GAER) is a binding site for ATP.

It belongs to the class-II aminoacyl-tRNA synthetase family. Type 2 subfamily. As to quaternary structure, homodimer. Makes part of a ribonucleoprotein particle (RNP) called transamidosome that allows channelling of the aa-tRNA from non-discriminating aspartyl-tRNA synthetase active site to the GatCAB amidotransferase site. The transamidosome complex is formed by two GatCABs, one dimeric ND-AspRSs and two tRNAs(Asn) molecules.

The protein localises to the cytoplasm. It catalyses the reaction tRNA(Asx) + L-aspartate + ATP = L-aspartyl-tRNA(Asx) + AMP + diphosphate. Functionally, aspartyl-tRNA synthetase with relaxed tRNA specificity since it is able to aspartylate not only its cognate tRNA(Asp) but also tRNA(Asn) with similar efficiencies. Reaction proceeds in two steps: L-aspartate is first activated by ATP to form Asp-AMP and then transferred to the acceptor end of tRNA(Asp/Asn). The protein is Aspartate--tRNA(Asp/Asn) ligase (aspS2) of Thermus thermophilus (strain ATCC 27634 / DSM 579 / HB8).